Reading from the N-terminus, the 631-residue chain is BTB/POZ domain-containing protein At1g67900 (631 aa).

In terms of domain architecture, BTB spans 28–93 (SDFTIEVSGS…CYGITITISA (66 aa)). The NPH3 domain occupies 200 to 509 (GWWAEDIAEL…VQVLFYEQAR (310 aa)). The segment at 361 to 399 (QTSPPTSPLRGKKGMMDRRRRSRSAENIDLEFQESRRSS) is disordered. Residues 370 to 382 (RGKKGMMDRRRRS) show a composition bias toward basic residues. Y450 carries the post-translational modification Phosphotyrosine. S567 carries the phosphoserine modification.

This sequence belongs to the NPH3 family.

Its pathway is protein modification; protein ubiquitination. Functionally, may act as a substrate-specific adapter of an E3 ubiquitin-protein ligase complex (CUL3-RBX1-BTB) which mediates the ubiquitination and subsequent proteasomal degradation of target proteins. The polypeptide is BTB/POZ domain-containing protein At1g67900 (Arabidopsis thaliana (Mouse-ear cress)).